The sequence spans 1892 residues: Protein TIC 214 (1892 aa).

6 consecutive transmembrane segments (helical) span residues 12–32 (LISL…YYGF), 68–88 (FIAG…HLAL), 89–109 (GKPH…FFWN), 128–148 (LSIQ…HFIL), 176–196 (VGWL…LVWI), and 225–245 (IFSI…PSPI). Acidic residues predominate over residues 256-266 (PEEVGESEEER). The disordered stretch occupies residues 256-299 (PEEVGESEEERNIEIETISEGGGANQKQGTEENTSSSLFSEEEV). Polar residues predominate over residues 280–294 (NQKQGTEENTSSSLF). A helical transmembrane segment spans residues 1115–1135 (FYFFINFFIEKIYMDILLYII). The tract at residues 1613-1636 (SNQEKDVEEDYDKSDKKKRRKKKQ) is disordered.

It belongs to the TIC214 family. As to quaternary structure, part of the Tic complex.

It is found in the plastid. It localises to the chloroplast inner membrane. Involved in protein precursor import into chloroplasts. May be part of an intermediate translocation complex acting as a protein-conducting channel at the inner envelope. The chain is Protein TIC 214 from Gossypium hirsutum (Upland cotton).